The chain runs to 184 residues: Inorganic pyrophosphatase (184 aa).

Substrate contacts are provided by K19, R33, and Y45. Residues D55, D60, and D92 each coordinate Mg(2+). Y129 is a binding site for substrate.

The protein belongs to the PPase family. Homohexamer. Requires Mg(2+) as cofactor.

The protein localises to the cytoplasm. The catalysed reaction is diphosphate + H2O = 2 phosphate + H(+). Functionally, catalyzes the hydrolysis of inorganic pyrophosphate (PPi) forming two phosphate ions. The sequence is that of Inorganic pyrophosphatase from Mycoplasma genitalium (strain ATCC 33530 / DSM 19775 / NCTC 10195 / G37) (Mycoplasmoides genitalium).